Reading from the N-terminus, the 345-residue chain is NADH-quinone oxidoreductase subunit H (345 aa).

8 helical membrane-spanning segments follow: residues 9–29 (ALGA…LVFA), 82–102 (VVMV…EGVV), 108–128 (VGVI…TLAG), 154–174 (MGLA…MEIV), 183–203 (LLGW…VTAF), 241–261 (YVNW…GYLV), 282–302 (LLQF…FIWV), and 325–345 (IALA…AVGL).

Belongs to the complex I subunit 1 family. As to quaternary structure, NDH-1 is composed of 14 different subunits. Subunits NuoA, H, J, K, L, M, N constitute the membrane sector of the complex.

It localises to the cell inner membrane. It carries out the reaction a quinone + NADH + 5 H(+)(in) = a quinol + NAD(+) + 4 H(+)(out). Functionally, NDH-1 shuttles electrons from NADH, via FMN and iron-sulfur (Fe-S) centers, to quinones in the respiratory chain. The immediate electron acceptor for the enzyme in this species is believed to be ubiquinone. Couples the redox reaction to proton translocation (for every two electrons transferred, four hydrogen ions are translocated across the cytoplasmic membrane), and thus conserves the redox energy in a proton gradient. This subunit may bind ubiquinone. The protein is NADH-quinone oxidoreductase subunit H of Salinibacter ruber (strain DSM 13855 / M31).